We begin with the raw amino-acid sequence, 366 residues long: MNKVVLLCRPGFEKECAAEITDKAGKREIFGFARVKENAGYVIYECYQPEDGEKLISELPFSSLIFARQWFVVGELLQHLPPEDRITPIVGMLQGVVEKGGELRVEVADTNESKELMKFCRKFTVPLRAALRDVGVLTNYETPKRPVVHVFFIAPGCCYTGYSFAHNNSPFYMGIPRLKFPSDAPSRSTLKLEEALHVFIPEDEWDERLANGMYAVDLGACPGGWTYQLVKRNMWVYSVDNGPMAQSLMDTGQVTWLREDGFRYRPNRNNISWMVCDMVEKPAKVTALMAQWLVNGWCRETIFNLKLPMKKRYEEVSHNLAYLQAQLDEHGVNAQIQARQLYHDREEVTVHVRRLWAAVGGRRDER.

S-adenosyl-L-methionine is bound by residues Ser188, 221–224 (CPGG), Asp240, Asp260, and Asp277. Lys306 serves as the catalytic Proton acceptor.

This sequence belongs to the class I-like SAM-binding methyltransferase superfamily. RNA methyltransferase RlmE family. RlmM subfamily. As to quaternary structure, monomer.

Its subcellular location is the cytoplasm. It catalyses the reaction cytidine(2498) in 23S rRNA + S-adenosyl-L-methionine = 2'-O-methylcytidine(2498) in 23S rRNA + S-adenosyl-L-homocysteine + H(+). Its function is as follows. Catalyzes the 2'-O-methylation at nucleotide C2498 in 23S rRNA. The protein is Ribosomal RNA large subunit methyltransferase M of Salmonella paratyphi C (strain RKS4594).